A 340-amino-acid chain; its full sequence is Glycerol-3-phosphate dehydrogenase [NAD(P)+] (340 aa).

Positions 11, 12, 33, and 106 each coordinate NADPH. Sn-glycerol 3-phosphate is bound by residues lysine 106, glycine 137, and serine 139. Alanine 141 contacts NADPH. Residues lysine 192, aspartate 245, serine 255, arginine 256, and asparagine 257 each contribute to the sn-glycerol 3-phosphate site. Lysine 192 functions as the Proton acceptor in the catalytic mechanism. Residue arginine 256 participates in NADPH binding. Residues valine 280 and glutamate 282 each contribute to the NADPH site.

The protein belongs to the NAD-dependent glycerol-3-phosphate dehydrogenase family.

The protein localises to the cytoplasm. It carries out the reaction sn-glycerol 3-phosphate + NAD(+) = dihydroxyacetone phosphate + NADH + H(+). It catalyses the reaction sn-glycerol 3-phosphate + NADP(+) = dihydroxyacetone phosphate + NADPH + H(+). It participates in membrane lipid metabolism; glycerophospholipid metabolism. Catalyzes the reduction of the glycolytic intermediate dihydroxyacetone phosphate (DHAP) to sn-glycerol 3-phosphate (G3P), the key precursor for phospholipid synthesis. The polypeptide is Glycerol-3-phosphate dehydrogenase [NAD(P)+] (Bacillus cereus (strain G9842)).